Reading from the N-terminus, the 50-residue chain is Sperm protamine P1 (50 aa).

It belongs to the protamine P1 family. In terms of assembly, cross-linked by interchain disulfide bonds around the DNA-helix. As to expression, testis.

It is found in the nucleus. The protein localises to the chromosome. Its function is as follows. Protamines substitute for histones in the chromatin of sperm during the haploid phase of spermatogenesis. They compact sperm DNA into a highly condensed, stable and inactive complex. The chain is Sperm protamine P1 (PRM1) from Saimiri sciureus (Common squirrel monkey).